The chain runs to 185 residues: HTH-type transcriptional regulator Hpr (185 aa).

An HTH marR-type domain is found at 13–157 (AMIFSQRIAQ…LIAILRNIYG (145 aa)). Residues 63–86 (ISEIAKFGVMHVSTAFNFSKKLEE) constitute a DNA-binding region (H-T-H motif).

In terms of assembly, homodimer.

Its function is as follows. Negative regulator of protease production and sporulation. The chain is HTH-type transcriptional regulator Hpr from Bacillus cereus (strain G9842).